Consider the following 1596-residue polypeptide: Transcription factor Zelda (1596 aa).

Disordered regions lie at residues 1–143, 209–273, and 490–530; these read MTSI…QQQQ, SGLG…GGAA, and TSPA…SVLP. Positions 13-24 are enriched in low complexity; the sequence is AAEALASSSATD. Residues 25–53 are compositionally biased toward gly residues; it reads SGGGGAGGGGGGGGGGSGGPGAGGTGGVG. The segment covering 60–72 has biased composition (polar residues); it reads NATISAAADSSDN. Composition is skewed to low complexity over residues 73–123 and 226–267; these read QPGT…ITHQ and SAPS…QTPG. Residues 501-518 show a composition bias toward gly residues; sequence GGPGQEGAAGAAPGGGYR. The C2H2-type 1 zinc finger occupies 552–576; that stretch reads YNCTACNKWFTSSGHLKRHYNTTLH. 4 disordered regions span residues 578-813, 825-945, 1017-1074, and 1252-1322; these read NAVK…TTTA, EDSN…MGML, GEQH…MPLT, and QMQH…TTLP. The segment covering 610–634 has biased composition (low complexity); the sequence is RGNAAAAAAAAAAAASASGQGQQQQ. Residues 635-653 show a composition bias toward pro residues; it reads PPIPPPPANVPPPEPPRSP. Gly residues predominate over residues 656–668; that stretch reads YGGGGGLGVGAMG. Over residues 673–682 the composition is skewed to polar residues; it reads SQYSASPSPT. Low complexity-rich tracts occupy residues 683–709 and 719–753; these read QQQQ…GYGY and NASP…HHNS. Residues 768 to 781 are compositionally biased toward polar residues; sequence PHNNNTTQMPSSQM. Residues 796-813 are compositionally biased toward low complexity; that stretch reads TTTRAPQITTTATTTTTA. The segment covering 830 to 840 has biased composition (basic residues); that stretch reads THTHTHTHPNH. The span at 849–858 shows a compositional bias: low complexity; it reads SSSSSSSMAT. Over residues 864-877 the composition is skewed to basic and acidic residues; that stretch reads QELRDQEQADDHLH. Residues 879-916 are compositionally biased toward low complexity; it reads HQQASQQYLLSARHYHSSTPNTLSSSNTNPSTPSSNSP. A transactivation activation domain (TAD) region spans residues 904-1297; sequence SNTNPSTPSS…PLAKKRRGGN (394 aa). Polar residues predominate over residues 921-932; the sequence is RQEQQGTDFSRT. Pro residues predominate over residues 933-944; sequence TPPPQPLPPMGM. Basic and acidic residues predominate over residues 1019 to 1036; the sequence is QHQRQEADHHQQQRELHQ. Low complexity-rich tracts occupy residues 1037 to 1062 and 1252 to 1275; these read LDQQ…SPTS and QMQH…QQQQ. Composition is skewed to polar residues over residues 1276–1286 and 1309–1322; these read ILADQTQTMAQ and SSVG…TTLP. The C2H2-type 2 zinc-finger motif lies at 1326–1349; sequence IKCLECDKEFTKNCYLTQHNKSFH. The segment at 1355–1378 adopts a C2H2-type 3; degenerate zinc-finger fold; the sequence is FRCQKCGKRFQSEDVYTTHLGRHR. C2H2-type zinc fingers lie at residues 1384-1407 and 1413-1435; these read HKCE…EAIH and HMCD…LETH.

As to expression, zygotically expressed in the developing embryonic germ layers, nervous system, imaginal disk primordia and in larval wing and eye disks. Detected in the germline cells of the ovary, in unfertilized eggs and throughout early development. Later, it becomes mostly restricted to the nervous system and specific head regions. Also expressed in imaginal wing disks in third instar larvae.

It localises to the nucleus. Its subcellular location is the chromosome. Its function is as follows. Transcription factor required for zygotic genome activation (ZGA), a critical event in early embryonic development during which the developmental control passes from maternally provided mRNAs to the expression of the zygotic genome after fertilization. Binds to regulatory DNA sequences containing a 5'-CAGGTAG-3' sequence motif, which are highly enriched among developmental enhancers. Within 1 hour into development, or by the embryo's 8th nuclear cycle, binds the majority of its motifs genome-wide. Zelda-binding promotes nucleosome depletion and chromatin accessibility, thereby facilitating the binding of patterning transcription factors, including the binding of the dorsoventral patterning transcription factors dorsal (dl) and twist (twi), and the anteroposterior patterning transcription factors bicoid (bcd) and caudal (cad). Promotes the activity of patterning transcription factors, such as bcd and dl, by lowering the concentration threshold required for transcriptional activation. Required both for the earliest (minor) and major waves of transcription during ZGA. Also involved in maternal mRNA clearance during the maternal-to-zygote transition by promoting expression of microRNAs (miRNAs), such as miR-1, miR-9a and miR-309, which mediate degradation of maternally-loaded RNAs. Also involved in post-blastoderm development: nvolved in nervous system development by maintaining neuroblasts in an undifferentiated state and equired for wing disk development. Constitutes the main isoform expressed throughout development. Transcription factor required for zygotic genome activation (ZGA). Functionally, acts as a dominant negative inhibitor of transcription factor activity of isoform A. This chain is Transcription factor Zelda, found in Drosophila melanogaster (Fruit fly).